Reading from the N-terminus, the 602-residue chain is MKESGTFFLVVGPSGAGKDSLIDGARATLGNDEYVFARRIITRPSGSPGEDHESVAEAEFAERERNGEFLVTWHAHGLRYGLPQWLVGLLETGKHVVANGSRGVIAMLARQLPRFVVVNVTAPQDVLAQRIAARGRESGDDVMRRVARQAPPMPDGVHCVTVTNDSTLDLGVARFTDALRNGANAGSVPQPASRRHLAAKLDGQPLDEGAYEAILRDAIAGRYTAQELTAFLTAATRSLDDREVVALARARTRFTARIEWDEPIVVDKHSMGGIPGSRITLIVVPIVAAYGLAMPKTSSRAITSAAGTADAMETVARVDLTHDDVRRCVAQARACIAWNGRLNHSVIDDVMNAITRPLGLDSRRWAVASILSKKATAGATHVIVDIPYGPQTKLSARADADALAGLFEEVGKGLGLHVRALVTDGSRPIGRGVGPALEVRDVRQVLENHPDAPMDLREKALRFAGEIIAFDPRVASAAQGMRIATALLDEGSARAAFDRIVATQGIRPDPVAPGAHTHVIVAPAEGRVAAINGWQISGIARAAGAPRSAGAGIDLLCTIGERVAAGEPLYRIHAESAADLATAVAMTGPAGEASTAVRVDPD.

Residues 1-187 (MKESGTFFLV…ALRNGANAGS (187 aa)) form a ribose 1,5-bisphosphokinase region. The segment at 188-602 (VPQPASRRHL…ASTAVRVDPD (415 aa)) is thymidinephosphorylase.

It in the N-terminal section; belongs to the ribose 1,5-bisphosphokinase family. This sequence in the C-terminal section; belongs to the thymidine/pyrimidine-nucleoside phosphorylase family. Type 2 subfamily.

The catalysed reaction is alpha-D-ribose 1,5-bisphosphate + ATP = 5-phospho-alpha-D-ribose 1-diphosphate + ADP. It carries out the reaction thymidine + phosphate = 2-deoxy-alpha-D-ribose 1-phosphate + thymine. The protein operates within metabolic intermediate biosynthesis; 5-phospho-alpha-D-ribose 1-diphosphate biosynthesis; 5-phospho-alpha-D-ribose 1-diphosphate from D-ribose 5-phosphate (route II): step 3/3. Functionally, catalyzes the phosphorylation of ribose 1,5-bisphosphate to 5-phospho-D-ribosyl alpha-1-diphosphate (PRPP). The sequence is that of Bifunctional ribose 1,5-bisphosphokinase-thymidine phosphorylase (phnN) from Cupriavidus pinatubonensis (strain JMP 134 / LMG 1197) (Cupriavidus necator (strain JMP 134)).